A 530-amino-acid chain; its full sequence is Potassium voltage-gated channel subfamily A member 6 (530 aa).

A disordered region spans residues 1-35; sequence MRSEKSLTLAAPGEVRGPEGEQQDAGEFQEAEGGG. Residue serine 3 is modified to Phosphoserine. Over residues 21–30 the composition is skewed to acidic residues; that stretch reads EQQDAGEFQE. Residues 172–193 form a helical membrane-spanning segment; sequence PARGIAIVSVLVILISIVIFCL. The segment at 203–239 is disordered; it reads GRGGSNEGSGTRMSPASRGSHEEEDEDEDSYAFPGSI. Residue serine 222 is modified to Phosphoserine; by CK2. The helical transmembrane segment at 264-285 threads the bilayer; that stretch reads FFLVETLCIVWFTFELLVRFSA. The S-palmitoyl cysteine moiety is linked to residue cysteine 286. A helical membrane pass occupies residues 297–317; the sequence is MNIIDLVAIFPYFITLGTELV. Residues 339–359 traverse the membrane as a helical; Voltage-sensor segment; sequence LAILRVIRLVRVFRIFKLSRH. The tract at residues 361–374 is S4-S5 linker; it reads KGLQILGKTLQASM. The helical transmembrane segment at 375–396 threads the bilayer; sequence RELGLLIFFLFIGVILFSSAVY. Residues 411-422 constitute an intramembrane region (helical); the sequence is PDAFWWAVVTMT. The Selectivity filter motif lies at 423–428; that stretch reads TVGYGD. The stretch at 423-430 is an intramembrane region; it reads TVGYGDMY. The helical transmembrane segment at 438-466 threads the bilayer; that stretch reads IVGSLCAIAGVLTIALPVPVIVSNFNYFY. Serine 512 is modified (phosphoserine; by PKA). The PDZ-binding motif lies at 527 to 529; that stretch reads LTE. Threonine 528 bears the Phosphothreonine; by PKA mark.

It belongs to the potassium channel family. A (Shaker) (TC 1.A.1.2) subfamily. Kv1.6/KCNA6 sub-subfamily. As to quaternary structure, homotetramer and heterotetramer of potassium channel proteins. Interacts with KCNAB1 and KCNAB2.

Its subcellular location is the cell membrane. It catalyses the reaction K(+)(in) = K(+)(out). Functionally, voltage-gated potassium channel that mediates transmembrane potassium transport in excitable membranes. Forms tetrameric potassium-selective channels through which potassium ions pass in accordance with their electrochemical gradient. The channel alternates between opened and closed conformations in response to the voltage difference across the membrane. Can form functional homotetrameric channels and heterotetrameric channels that contain variable proportions of KCNA1, KCNA2, KCNA4, KNCA5, KCNA6, and possibly other family members as well; channel properties depend on the type of alpha subunits that are part of the channel. Channel properties are modulated by cytoplasmic beta subunits that regulate the subcellular location of the alpha subunits and promote rapid inactivation. Homotetrameric channels display rapid activation and slow inactivation. This is Potassium voltage-gated channel subfamily A member 6 (Kcna6) from Rattus norvegicus (Rat).